Reading from the N-terminus, the 276-residue chain is Pantothenate synthetase (276 aa).

27 to 34 (MGALHKGH) is an ATP binding site. The active-site Proton donor is the His34. Position 58 (Gln58) interacts with (R)-pantoate. Gln58 lines the beta-alanine pocket. Residue 147–150 (GKKD) participates in ATP binding. A (R)-pantoate-binding site is contributed by Gln153. ATP is bound by residues Val176 and 184–187 (LSSR).

Belongs to the pantothenate synthetase family. Homodimer.

It localises to the cytoplasm. It carries out the reaction (R)-pantoate + beta-alanine + ATP = (R)-pantothenate + AMP + diphosphate + H(+). Its pathway is cofactor biosynthesis; (R)-pantothenate biosynthesis; (R)-pantothenate from (R)-pantoate and beta-alanine: step 1/1. Catalyzes the condensation of pantoate with beta-alanine in an ATP-dependent reaction via a pantoyl-adenylate intermediate. The chain is Pantothenate synthetase from Helicobacter pylori (strain ATCC 700392 / 26695) (Campylobacter pylori).